Consider the following 212-residue polypeptide: ATP-dependent Clp protease proteolytic subunit (212 aa).

S106 (nucleophile) is an active-site residue. The active site involves H131.

Belongs to the peptidase S14 family. In terms of assembly, fourteen ClpP subunits assemble into 2 heptameric rings which stack back to back to give a disk-like structure with a central cavity, resembling the structure of eukaryotic proteasomes.

The protein localises to the cytoplasm. It catalyses the reaction Hydrolysis of proteins to small peptides in the presence of ATP and magnesium. alpha-casein is the usual test substrate. In the absence of ATP, only oligopeptides shorter than five residues are hydrolyzed (such as succinyl-Leu-Tyr-|-NHMec, and Leu-Tyr-Leu-|-Tyr-Trp, in which cleavage of the -Tyr-|-Leu- and -Tyr-|-Trp bonds also occurs).. Cleaves peptides in various proteins in a process that requires ATP hydrolysis. Has a chymotrypsin-like activity. Plays a major role in the degradation of misfolded proteins. The protein is ATP-dependent Clp protease proteolytic subunit of Rhodopseudomonas palustris (strain ATCC BAA-98 / CGA009).